A 307-amino-acid chain; its full sequence is tRNA N6-adenosine threonylcarbamoyltransferase (307 aa).

The Fe cation site is built by His108 and His112. Substrate-binding positions include Ile131–Gly135, Asp164, Gly177, Asp181, and Asn266. Asp290 provides a ligand contact to Fe cation.

This sequence belongs to the KAE1 / TsaD family. Requires Fe(2+) as cofactor.

Its subcellular location is the cytoplasm. It catalyses the reaction L-threonylcarbamoyladenylate + adenosine(37) in tRNA = N(6)-L-threonylcarbamoyladenosine(37) in tRNA + AMP + H(+). Functionally, required for the formation of a threonylcarbamoyl group on adenosine at position 37 (t(6)A37) in tRNAs that read codons beginning with adenine. Is involved in the transfer of the threonylcarbamoyl moiety of threonylcarbamoyl-AMP (TC-AMP) to the N6 group of A37, together with TsaE and TsaB. TsaD likely plays a direct catalytic role in this reaction. This chain is tRNA N6-adenosine threonylcarbamoyltransferase, found in Mycoplasmopsis synoviae (strain 53) (Mycoplasma synoviae).